The primary structure comprises 360 residues: DNA replication and repair protein RecF (360 aa).

30-37 contacts ATP; sequence GHNGSGKT.

The protein belongs to the RecF family.

It localises to the cytoplasm. In terms of biological role, the RecF protein is involved in DNA metabolism; it is required for DNA replication and normal SOS inducibility. RecF binds preferentially to single-stranded, linear DNA. It also seems to bind ATP. The chain is DNA replication and repair protein RecF from Actinobacillus pleuropneumoniae serotype 3 (strain JL03).